The chain runs to 80 residues: MDNQEIKLLLIKKLNLEQANITGDSNHIKIIAIGNIFKNVSQVKRQQIIYAPLIDMIKEKHIHAVSIMSYTPEEWEKTKK.

Belongs to the BolA/IbaG family.

This is an uncharacterized protein from Buchnera aphidicola subsp. Acyrthosiphon pisum (strain APS) (Acyrthosiphon pisum symbiotic bacterium).